The chain runs to 421 residues: NADH-dependent phenylglyoxylate dehydrogenase subunit epsilon (421 aa).

FAD-binding positions include 15-18 (SSHA), 39-40 (TR), and 279-297 (ATAQ…NAIL).

It belongs to the FAD-dependent oxidoreductase family. In terms of assembly, dimer of heteropentamers composed of an alpha (PadG), a beta (PadI), a gamma (PadE), a delta (PadF) and an epsilon (PadH) subunit. The cofactor is FAD.

The catalysed reaction is phenylglyoxylate + NAD(+) + CoA = benzoyl-CoA + CO2 + NADH. Activated by magnesium ions and thiamine diphosphate. In terms of biological role, involved in the anaerobic metabolism of phenylalanine and phenylacetate. Catalyzes the oxidative decarboxylation of phenylglyoxylate to benzoyl-CoA and CO(2). It can also react slowly with 2-oxo-3-methylbutanoate and use different electron acceptors such as benzyl viologen, methyl viologen, FAD or FMN, but NAD seems to be the physiological electron acceptor. Also catalyzes an isotope exchange between CO(2) and the carboxyl group which proves partial or complete reversibility of the oxidative decarboxylation reaction. This chain is NADH-dependent phenylglyoxylate dehydrogenase subunit epsilon (padH), found in Aromatoleum evansii (Azoarcus evansii).